We begin with the raw amino-acid sequence, 335 residues long: Galactosylgalactosylxylosylprotein 3-beta-glucuronosyltransferase 3 (335 aa).

At 1 to 7 (MKLKLKN) the chain is on the cytoplasmic side. A helical; Signal-anchor for type II membrane protein transmembrane segment spans residues 8 to 28 (VFLAYFLVSIAGLLYALVQLG). Over 29 to 335 (QPCDCLPPLR…GRGSDPAIEV (307 aa)) the chain is Lumenal. UDP-alpha-D-glucuronate-binding positions include 82–84 (PTY), Asp-113, Arg-156, Arg-161, and 194–196 (DDD). Residue Asp-196 coordinates Mn(2+). An interaction with galactose moiety of substrate glycoprotein region spans residues 243–252 (WEPSRPFPVD). Glu-281 (proton donor/acceptor) is an active-site residue. Asn-300 carries N-linked (GlcNAc...) asparagine glycosylation. 308–310 (HTR) provides a ligand contact to UDP-alpha-D-glucuronate. The segment covering 312-322 (EKPKMKQEEQL) has biased composition (basic and acidic residues). The segment at 312 to 335 (EKPKMKQEEQLQRQGRGSDPAIEV) is disordered.

Belongs to the glycosyltransferase 43 family. Homodimer; disulfide-linked. Interacts with PXYLP1; the interaction increases the 2-phosphoxylose phosphatase activity of PXYLP1 during completion of linkage region formation in a B3GAT3-mediated manner. Mn(2+) serves as cofactor. In terms of processing, N-glycosylated. Ubiquitous (but weakly expressed in all tissues examined).

The protein localises to the golgi apparatus membrane. It is found in the golgi apparatus. The protein resides in the cis-Golgi network. The catalysed reaction is 3-O-(beta-D-galactosyl-(1-&gt;3)-beta-D-galactosyl-(1-&gt;4)-beta-D-xylosyl)-L-seryl-[protein] + UDP-alpha-D-glucuronate = 3-O-(beta-D-GlcA-(1-&gt;3)-beta-D-Gal-(1-&gt;3)-beta-D-Gal-(1-&gt;4)-beta-D-Xyl)-L-seryl-[protein] + UDP + H(+). The protein operates within protein modification; protein glycosylation. With respect to regulation, inhibited by EDTA. Its function is as follows. Glycosaminoglycans biosynthesis. Involved in forming the linkage tetrasaccharide present in heparan sulfate and chondroitin sulfate. Transfers a glucuronic acid moiety from the uridine diphosphate-glucuronic acid (UDP-GlcUA) to the common linkage region trisaccharide Gal-beta-1,3-Gal-beta-1,4-Xyl covalently bound to a Ser residue at the glycosaminylglycan attachment site of proteoglycans. Can also play a role in the biosynthesis of l2/HNK-1 carbohydrate epitope on glycoproteins. Shows strict specificity for Gal-beta-1,3-Gal-beta-1,4-Xyl, exhibiting negligible incorporation into other galactoside substrates including Galbeta1-3Gal beta1-O-benzyl, Galbeta1-4GlcNAc and Galbeta1-4Glc. Stimulates 2-phosphoxylose phosphatase activity of PXYLP1 in presence of uridine diphosphate-glucuronic acid (UDP-GlcUA) during completion of linkage region formation. The protein is Galactosylgalactosylxylosylprotein 3-beta-glucuronosyltransferase 3 (B3GAT3) of Homo sapiens (Human).